Here is a 771-residue protein sequence, read N- to C-terminus: Protein lin-54 homolog (771 aa).

Disordered stretches follow at residues 21-44 (AMDE…SAQV) and 68-105 (TNAK…IPSL). Low complexity predominate over residues 72–92 (STTSSTTQLLLTPSSSSSTTT). A phosphoserine mark is found at Ser-288, Ser-292, and Ser-308. Residues 544 to 657 (PRKPCNCTRS…KCMGCKNFEE (114 aa)) form the CRC domain. The segment at 546–559 (KPCNCTRSQCLKLY) is DNA-binding. Residues Cys-548, Cys-550, Cys-555, Cys-560, Cys-562, Cys-569, Cys-572, Cys-574, and Cys-577 each contribute to the Zn(2+) site. Residues 606-619 (IGKGKEGESDRRHS) form a linker region. The Zn(2+) site is built by Cys-622, Cys-624, Cys-629, Cys-634, Cys-636, Cys-643, Cys-647, Cys-649, and Cys-652. The segment at 622 to 635 (CNCKKSGCLKNYCE) is DNA-binding.

Belongs to the lin-54 family. Component of the DREAM complex.

The protein resides in the nucleus. Functionally, component of the DREAM complex, a multiprotein complex that can both act as a transcription activator or repressor depending on the context. Specifically recognizes the consensus motif 5'-TTYRAA-3' in target DNA. The chain is Protein lin-54 homolog (lin54) from Danio rerio (Zebrafish).